The sequence spans 415 residues: WD repeat and FYVE domain-containing protein 2 (415 aa).

WD repeat units follow at residues His-71 to Ser-103, Cys-119 to His-148, Ala-202 to Asp-232, and Gly-245 to Pro-284. The segment at Trp-286 to Lys-357 adopts an FYVE-type zinc-finger fold. Zn(2+) contacts are provided by Cys-292, Cys-295, Cys-319, Cys-322, Cys-327, Cys-330, Cys-349, and Cys-352. One copy of the WD 5 repeat lies at Glu-373–Asp-403.

In terms of biological role, plays a role in coelomocyte endocytosis. This is WD repeat and FYVE domain-containing protein 2 (wdfy-2) from Caenorhabditis elegans.